Consider the following 620-residue polypeptide: Ferric/cupric reductase transmembrane component 7 (620 aa).

Topologically, residues 1–45 (MIEERDLVLSNGIHCIADIHSELYARLKKESQAATPWVYQKQYGK) are extracellular. A helical membrane pass occupies residues 46-66 (FVTYFVAVIIFLSLIKKLAFM). Residues 67 to 107 (YYDSSEEFLPEKKNSPTTPSVFLARIMTKLVAFNRYICYRK) are Cytoplasmic-facing. The chain crosses the membrane as a helical span at residues 108-128 (FPTLIFSYLGIPTSVGTFLVV). The Extracellular portion of the chain corresponds to 129–167 (MATTLYTLLYCFVPHPFYRPCAGFGSPPLSVRAGIMAIS). The Ferric oxidoreductase domain occupies 161–320 (AGIMAISLVP…LAVKGYLRPG (160 aa)). The chain crosses the membrane as a helical span at residues 168-188 (LVPFVFSLSGKINVIGWLVGL). At 189–194 (SYEKIN) the chain is on the cytoplasmic side. The helical transmembrane segment at 195-215 (IYHQWASILCLFFSWVHVIPF) threads the bilayer. Heme contacts are provided by His197 and His211. Residues 216–237 (LRQARHEGGYERMHQRWKASDM) are Extracellular-facing. A helical transmembrane segment spans residues 238–258 (WRSGVPPILFLNLLWLSSLPI). Residues 259 to 265 (ARRHFYE) are Cytoplasmic-facing. The chain crosses the membrane as a helical span at residues 266 to 286 (IFLQLHWILAVGFYISLFYHV). The heme site is built by His271 and His285. The Extracellular segment spans residues 287–292 (YPELNS). Residues 293–313 (HMYLVATIVVWFAQLFYRLAV) traverse the membrane as a helical segment. At 314-620 (KGYLRPGRSF…CYLHSESFGY (307 aa)) the chain is on the cytoplasmic side. One can recognise an FAD-binding FR-type domain in the interval 321 to 419 (RSFMASTIAN…DGPYGGIERD (99 aa)). 369-375 (HPFSIFP) serves as a coordination point for FAD. 411–414 (GPYG) is an NADP(+) binding site. The interval 519–543 (SDQSDLAKREKDTEFGQDDTESNST) is disordered. A compositionally biased stretch (basic and acidic residues) spans 523–532 (DLAKREKDTE). NADP(+) is bound at residue 578-579 (CF).

Belongs to the ferric reductase (FRE) family. FAD serves as cofactor.

Its subcellular location is the cell membrane. The catalysed reaction is 2 a Fe(II)-siderophore + NADP(+) + H(+) = 2 a Fe(III)-siderophore + NADPH. Functionally, cell surface metalloreductase. May be involved in copper homeostasis. This chain is Ferric/cupric reductase transmembrane component 7 (FRE7), found in Saccharomyces cerevisiae (strain ATCC 204508 / S288c) (Baker's yeast).